Reading from the N-terminus, the 163-residue chain is Photosystem II extrinsic protein V (163 aa).

The N-terminal stretch at 1–26 is a signal peptide; it reads MFKTYSKSFACILFCIFNIFVVSASA. Cys-63, Cys-66, His-67, and Met-130 together coordinate heme c.

This sequence belongs to the cytochrome c family. PsbV subfamily. As to quaternary structure, PSII is composed of 1 copy each of membrane proteins PsbA, PsbB, PsbC, PsbD, PsbE, PsbF, PsbH, PsbI, PsbJ, PsbK, PsbL, PsbM, PsbT, PsbY, PsbZ, Psb30/Ycf12, at least 3 peripheral proteins of the oxygen-evolving complex and a large number of cofactors. It forms dimeric complexes. The cofactor is heme c.

The protein localises to the plastid. The protein resides in the chloroplast thylakoid membrane. Its function is as follows. One of the extrinsic, lumenal subunits of photosystem II (PSII). PSII is a light-driven water plastoquinone oxidoreductase, using light energy to abstract electrons from H(2)O, generating a proton gradient subsequently used for ATP formation. The extrinsic proteins stabilize the structure of photosystem II oxygen-evolving complex (OEC), the ion environment of oxygen evolution and protect the OEC against heat-induced inactivation. This Thalassiosira pseudonana (Marine diatom) protein is Photosystem II extrinsic protein V.